The chain runs to 324 residues: NADH-quinone oxidoreductase subunit H (324 aa).

Transmembrane regions (helical) follow at residues 11–31, 81–101, 114–134, 154–174, 186–206, 237–257, 264–284, and 304–324; these read ILIT…CGAF, VIFT…FAIV, IGIL…LFAG, VSYE…AGSF, LWNV…GVAV, FFVG…TLFF, ILPP…MFIL, and VCLP…LYNA.

This sequence belongs to the complex I subunit 1 family. In terms of assembly, NDH-1 is composed of 13 different subunits. Subunits NuoA, H, J, K, L, M, N constitute the membrane sector of the complex.

It localises to the cell inner membrane. It carries out the reaction a quinone + NADH + 5 H(+)(in) = a quinol + NAD(+) + 4 H(+)(out). NDH-1 shuttles electrons from NADH, via FMN and iron-sulfur (Fe-S) centers, to quinones in the respiratory chain. The immediate electron acceptor for the enzyme in this species is believed to be ubiquinone. Couples the redox reaction to proton translocation (for every two electrons transferred, four hydrogen ions are translocated across the cytoplasmic membrane), and thus conserves the redox energy in a proton gradient. This subunit may bind ubiquinone. The polypeptide is NADH-quinone oxidoreductase subunit H (Pectobacterium carotovorum subsp. carotovorum (strain PC1)).